A 60-amino-acid chain; its full sequence is Metallothionein B (60 aa).

The segment at 1 to 28 (MDPCECTKSGTCNCGGSCTCTNCSCTSC) is beta. The a divalent metal cation site is built by cysteine 4, cysteine 6, cysteine 12, cysteine 14, cysteine 18, cysteine 20, cysteine 23, cysteine 25, cysteine 28, cysteine 32, cysteine 33, cysteine 35, cysteine 36, cysteine 40, cysteine 43, cysteine 47, cysteine 49, cysteine 54, cysteine 58, and cysteine 59. The alpha stretch occupies residues 29 to 60 (KKSCCPCCPSGCTKCASGCVCKGKTCDTSCCQ).

The protein belongs to the metallothionein superfamily. Type 1 family.

In terms of biological role, metallothioneins have a high content of cysteine residues that bind various heavy metals. This Chaenocephalus aceratus (Blackfin icefish) protein is Metallothionein B (mtb).